The primary structure comprises 177 residues: Large ribosomal subunit protein uL6 (177 aa).

The protein belongs to the universal ribosomal protein uL6 family. As to quaternary structure, part of the 50S ribosomal subunit.

Functionally, this protein binds to the 23S rRNA, and is important in its secondary structure. It is located near the subunit interface in the base of the L7/L12 stalk, and near the tRNA binding site of the peptidyltransferase center. The protein is Large ribosomal subunit protein uL6 of Shewanella frigidimarina (strain NCIMB 400).